The chain runs to 301 residues: Nucleotide-binding protein ELI_02120 (301 aa).

ATP is bound at residue 12-19 (GMSGAGKS). 62–65 (DSRT) provides a ligand contact to GTP.

It belongs to the RapZ-like family.

In terms of biological role, displays ATPase and GTPase activities. This chain is Nucleotide-binding protein ELI_02120, found in Erythrobacter litoralis (strain HTCC2594).